Consider the following 290-residue polypeptide: S-adenosylmethionine decarboxylase proenzyme (290 aa).

The active-site Schiff-base intermediate with substrate; via pyruvic acid is the Ser-138. Ser-138 is subject to Pyruvic acid (Ser); by autocatalysis. The active-site Proton acceptor; for processing activity is His-143. Catalysis depends on Cys-166, which acts as the Proton donor; for catalytic activity.

Belongs to the prokaryotic AdoMetDC family. Type 2 subfamily. Heterooctamer of four alpha and four beta chains arranged as a tetramer of alpha/beta heterodimers. It depends on pyruvate as a cofactor. Is synthesized initially as an inactive proenzyme. Formation of the active enzyme involves a self-maturation process in which the active site pyruvoyl group is generated from an internal serine residue via an autocatalytic post-translational modification. Two non-identical subunits are generated from the proenzyme in this reaction, and the pyruvate is formed at the N-terminus of the alpha chain, which is derived from the carboxyl end of the proenzyme. The post-translation cleavage follows an unusual pathway, termed non-hydrolytic serinolysis, in which the side chain hydroxyl group of the serine supplies its oxygen atom to form the C-terminus of the beta chain, while the remainder of the serine residue undergoes an oxidative deamination to produce ammonia and the pyruvoyl group blocking the N-terminus of the alpha chain.

It carries out the reaction S-adenosyl-L-methionine + H(+) = S-adenosyl 3-(methylsulfanyl)propylamine + CO2. Its pathway is amine and polyamine biosynthesis; S-adenosylmethioninamine biosynthesis; S-adenosylmethioninamine from S-adenosyl-L-methionine: step 1/1. Functionally, catalyzes the decarboxylation of S-adenosylmethionine to S-adenosylmethioninamine (dcAdoMet), the propylamine donor required for the synthesis of the polyamines spermine and spermidine from the diamine putrescine. The chain is S-adenosylmethionine decarboxylase proenzyme from Heliobacterium modesticaldum (strain ATCC 51547 / Ice1).